The following is a 374-amino-acid chain: N-acetyldiaminopimelate deacetylase (374 aa).

Aspartate 69 is an active-site residue. Residue glutamate 128 is the Proton acceptor of the active site.

Belongs to the peptidase M20A family. N-acetyldiaminopimelate deacetylase subfamily.

The enzyme catalyses N-acetyl-(2S,6S)-2,6-diaminopimelate + H2O = (2S,6S)-2,6-diaminopimelate + acetate. Its pathway is amino-acid biosynthesis; L-lysine biosynthesis via DAP pathway; LL-2,6-diaminopimelate from (S)-tetrahydrodipicolinate (acetylase route): step 3/3. Functionally, catalyzes the conversion of N-acetyl-diaminopimelate to diaminopimelate and acetate. This chain is N-acetyldiaminopimelate deacetylase, found in Bacillus velezensis (strain DSM 23117 / BGSC 10A6 / LMG 26770 / FZB42) (Bacillus amyloliquefaciens subsp. plantarum).